A 39-amino-acid polypeptide reads, in one-letter code: Photosystem II reaction center protein J (39 aa).

A helical transmembrane segment spans residues 7 to 27 (IPLWLVGLVGGLAVITMLSLF).

The protein belongs to the PsbJ family. PSII is composed of 1 copy each of membrane proteins PsbA, PsbB, PsbC, PsbD, PsbE, PsbF, PsbH, PsbI, PsbJ, PsbK, PsbL, PsbM, PsbT, PsbX, PsbY, PsbZ, Psb30/Ycf12, at least 3 peripheral proteins of the oxygen-evolving complex and a large number of cofactors. It forms dimeric complexes.

The protein localises to the plastid. It is found in the chloroplast thylakoid membrane. Its function is as follows. One of the components of the core complex of photosystem II (PSII). PSII is a light-driven water:plastoquinone oxidoreductase that uses light energy to abstract electrons from H(2)O, generating O(2) and a proton gradient subsequently used for ATP formation. It consists of a core antenna complex that captures photons, and an electron transfer chain that converts photonic excitation into a charge separation. This is Photosystem II reaction center protein J from Trieres chinensis (Marine centric diatom).